We begin with the raw amino-acid sequence, 417 residues long: D-amino acid dehydrogenase (417 aa).

3 to 17 (VIVLGSGVIGVTAAW) provides a ligand contact to FAD.

It belongs to the DadA oxidoreductase family. FAD is required as a cofactor.

It catalyses the reaction a D-alpha-amino acid + A + H2O = a 2-oxocarboxylate + AH2 + NH4(+). It participates in amino-acid degradation; D-alanine degradation; NH(3) and pyruvate from D-alanine: step 1/1. Its function is as follows. Oxidative deamination of D-amino acids. The polypeptide is D-amino acid dehydrogenase (Methylobacillus flagellatus (strain ATCC 51484 / DSM 6875 / VKM B-1610 / KT)).